Here is a 223-residue protein sequence, read N- to C-terminus: Ribonuclease DdI (223 aa).

The N-terminal stretch at Met1–Glu25 is a signal peptide. A disulfide bridge connects residues Cys46 and Cys51. Active-site residues include His63, Glu113, and His117. A disulfide bridge links Cys78 with Cys120. Residue Asn144 is glycosylated (N-linked (GlcNAc...) asparagine). Disulfide bonds link Cys183–Cys213 and Cys194–Cys205.

Belongs to the RNase T2 family.

The protein localises to the lysosome. The catalysed reaction is a ribonucleotidyl-ribonucleotide-RNA + H2O = a 3'-end 3'-phospho-ribonucleotide-RNA + a 5'-end dephospho-ribonucleoside-RNA + H(+). Inhibited by Cu(2+) and Zn(2+). In terms of biological role, releases mononucleotides from RNA in the order of 3'-GMP &gt; 3'-UMP &gt; 3'-AMP &gt; 3'-CMP. This Dictyostelium discoideum (Social amoeba) protein is Ribonuclease DdI (ddiA).